The primary structure comprises 381 residues: Acetylornithine deacetylase (381 aa).

A Zn(2+)-binding site is contributed by histidine 78. The active site involves aspartate 80. A Zn(2+)-binding site is contributed by aspartate 110. Glutamate 142 is a catalytic residue. Zn(2+)-binding residues include glutamate 143, glutamate 167, and histidine 353.

Belongs to the peptidase M20A family. ArgE subfamily. As to quaternary structure, homodimer. The cofactor is Zn(2+). Requires Co(2+) as cofactor. Glutathione is required as a cofactor.

The protein resides in the cytoplasm. It carries out the reaction N(2)-acetyl-L-ornithine + H2O = L-ornithine + acetate. It functions in the pathway amino-acid biosynthesis; L-arginine biosynthesis; L-ornithine from N(2)-acetyl-L-ornithine (linear): step 1/1. Its function is as follows. Catalyzes the hydrolysis of the amide bond of N(2)-acetylated L-amino acids. Cleaves the acetyl group from N-acetyl-L-ornithine to form L-ornithine, an intermediate in L-arginine biosynthesis pathway, and a branchpoint in the synthesis of polyamines. The sequence is that of Acetylornithine deacetylase from Moritella profunda.